A 472-amino-acid polypeptide reads, in one-letter code: Eukaryotic translation initiation factor 2 subunit 3, Y-linked (472 aa).

The residue at position 2 (alanine 2) is an N-acetylalanine. Serine 16 bears the Phosphoserine mark. Positions 39-247 (QATINIGTIG…YIVKKIPVPL (209 aa)) constitute a tr-type G domain. A G1 region spans residues 48-55 (GHVAHGKS). 51 to 56 (AHGKST) lines the GTP pocket. The tract at residues 76–80 (NITIK) is G2. Residues 134–137 (DCPG) are G3. GTP contacts are provided by residues 190-193 (NKID) and 225-227 (SAQ). The tract at residues 190 to 193 (NKID) is G4. Residues 225-227 (SAQ) are G5.

It belongs to the TRAFAC class translation factor GTPase superfamily. Classic translation factor GTPase family. EIF2G subfamily. In terms of assembly, eIF2 is a heterotrimer composed of an alpha (EIF2S1), a beta (EIF2S2) and a gamma (Eif2s3x and Eif2s3y) chain. eIF2 is member of the 43S pre-initiation complex (43S PIC). As to expression, widely expressed in males.

It catalyses the reaction GTP + H2O = GDP + phosphate + H(+). Member of the eIF2 complex that functions in the early steps of protein synthesis by forming a ternary complex with GTP and initiator tRNA. This complex binds to a 40S ribosomal subunit, followed by mRNA binding to form the 43S pre-initiation complex (43S PIC). Junction of the 60S ribosomal subunit to form the 80S initiation complex is preceded by hydrolysis of the GTP bound to eIF2 and release of an eIF2-GDP binary complex. In order for eIF2 to recycle and catalyze another round of initiation, the GDP bound to eIF2 must exchange with GTP by way of a reaction catalyzed by eIF-2B. Along with its paralog on chromosome X, may contribute to spermatogenesis up to the round spermatid stage. This chain is Eukaryotic translation initiation factor 2 subunit 3, Y-linked (Eif2s3y), found in Rattus norvegicus (Rat).